Here is a 421-residue protein sequence, read N- to C-terminus: MGRKPCCEKVGLRRGPWTSEEDQKLVSHITNNGLSCWRAIPKLAGLLRCGKSCRLRWTNYLRPDLKRGIFSEAEENLILDLHATLGNRWSRIAAQLPGRTDNEIKNYWNTRLKKRLRSQGLDPNTHLPLEDSKLDDTEDDTDDEGGDSSDVTMSDASKSEKRSKKKSKPKETVKVRQPKGPKPAPQLKMCQSDEGPVLLKVPKAPKSPISVNPGPGCNYDDDSEHSSSSTVTTKSHEDHRDSSDFIKALTSVSSFPEAELWSCIKPITNSFSSTALLSEWDSYRAFDSSLFPSSYPQLNSGLPKLEDVNSKSSAVASPVQGMLPAYNPMGMEMQTRMQFSSQLTHEIGQNYGGIFQETCYPQPDMGMSWSMHAELSHCGTESLFATPNPANAPSNFEEVPQPSPCTTSQELQRLAALLDLI.

2 HTH myb-type domains span residues 9–61 (KVGL…TNYL) and 62–116 (RPDL…KKRL). DNA-binding regions (H-T-H motif) lie at residues 37-61 (WRAI…TNYL) and 89-112 (WSRI…NTRL). The interval 119–240 (QGLDPNTHLP…VTTKSHEDHR (122 aa)) is disordered. The span at 136–147 (DTEDDTDDEGGD) shows a compositional bias: acidic residues.

Its subcellular location is the nucleus. In terms of biological role, possible transcription activator. The protein is Myb-related protein Pp2 (PP2) of Physcomitrium patens (Spreading-leaved earth moss).